Consider the following 224-residue polypeptide: uncharacterized protein (224 aa).

Helical transmembrane passes span 25–45 (MMLA…IPFF), 54–74 (ISVV…SLTI), 91–111 (IGVL…RLYF), 119–139 (FCWI…LTTL), 142–162 (ILIT…NFLI), and 174–194 (HFFF…YSFF).

The protein resides in the cell membrane. This is an uncharacterized protein from Mycoplasma genitalium (strain ATCC 33530 / DSM 19775 / NCTC 10195 / G37) (Mycoplasmoides genitalium).